A 151-amino-acid chain; its full sequence is MGTAKQNQNRKKFTREYKVKEIQRSITKKTRLRKEYLKALKDEGYAVPEKEPKTVAKESVRKIKEARAIEGKKKLDEKKEIKKQRKRMQKDELNKQRNEQLERIRVSKEKFQRREDRKKKLTQRTRTGQPLMGPKIEDLLDKIKTDDTYTS.

A coiled-coil region spans residues 70–113 (EGKKKLDEKKEIKKQRKRMQKDELNKQRNEQLERIRVSKEKFQR). The interval 76 to 151 (DEKKEIKKQR…KIKTDDTYTS (76 aa)) is disordered. Composition is skewed to basic and acidic residues over residues 89–115 (QKDELNKQRNEQLERIRVSKEKFQRRE) and 135–151 (KIEDLLDKIKTDDTYTS).

The protein belongs to the FYV7 family.

It is found in the nucleus. The protein resides in the nucleolus. Its function is as follows. Involved in the processing of the 20S pre-rRNA. Required for survival upon K1 Killer toxin exposure. The polypeptide is rRNA-processing protein FYV7 (FYV7) (Saccharomyces cerevisiae (strain ATCC 204508 / S288c) (Baker's yeast)).